The following is a 152-amino-acid chain: uncharacterized protein (152 aa).

Residues 3–143 (EQKLCQAINL…IIEIFTILKS (141 aa)) form the HTH marR-type domain. The segment at residues 55-78 (PGSLAMYQNVHKSAISNRLKKLLE) is a DNA-binding region (H-T-H motif).

This is an uncharacterized protein from Bacillus subtilis (strain 168).